The chain runs to 153 residues: UPF0260 protein YcgN (153 aa).

It belongs to the UPF0260 family.

This Shigella flexneri serotype 5b (strain 8401) protein is UPF0260 protein YcgN.